The chain runs to 162 residues: MSDKIGLFTGSFDPMTNGHLDIIERASRLFDKLYVGIFFNPHKQGFLPLENRKRGLEKALGHLENVEVVASHDKLVVDVAKRLGATFLVRGLRNAADLQYEASFDYYNHQLSSDIETIYLHSRPEHLYISSSGVRELLKFGQDIACHVPESILEEIRNEKKD.

Ser-11 is a substrate binding site. ATP-binding positions include 11 to 12 (SF) and His-19. Positions 43, 76, and 90 each coordinate substrate. ATP is bound by residues 91 to 93 (GLR), Glu-101, and 126 to 132 (HLYISSS).

It belongs to the bacterial CoaD family. As to quaternary structure, homohexamer. It depends on Mg(2+) as a cofactor.

Its subcellular location is the cytoplasm. It catalyses the reaction (R)-4'-phosphopantetheine + ATP + H(+) = 3'-dephospho-CoA + diphosphate. The protein operates within cofactor biosynthesis; coenzyme A biosynthesis; CoA from (R)-pantothenate: step 4/5. Functionally, reversibly transfers an adenylyl group from ATP to 4'-phosphopantetheine, yielding dephospho-CoA (dPCoA) and pyrophosphate. This is Phosphopantetheine adenylyltransferase from Streptococcus pneumoniae (strain Hungary19A-6).